Reading from the N-terminus, the 201-residue chain is Adenylyl-sulfate kinase (201 aa).

ATP is bound at residue 35 to 42 (GLSGSGKS). Catalysis depends on S109, which acts as the Phosphoserine intermediate.

Belongs to the APS kinase family.

The catalysed reaction is adenosine 5'-phosphosulfate + ATP = 3'-phosphoadenylyl sulfate + ADP + H(+). It functions in the pathway sulfur metabolism; hydrogen sulfide biosynthesis; sulfite from sulfate: step 2/3. Functionally, catalyzes the synthesis of activated sulfate. The chain is Adenylyl-sulfate kinase from Citrobacter koseri (strain ATCC BAA-895 / CDC 4225-83 / SGSC4696).